Consider the following 87-residue polypeptide: Potassium channel toxin Ttr-beta-KTx (87 aa).

The signal sequence occupies residues 1–19 (MERKWALLLFLGMVTLVSC). The propeptide occupies 20–27 (GLREKHVQ). A BetaSPN-type CS-alpha/beta domain is found at 53 to 87 (QFGCPAYEGYCNNHCQDIKRKDGECHGFKCKCAKD). Intrachain disulfides connect Cys-56–Cys-77, Cys-63–Cys-82, and Cys-67–Cys-84.

This sequence belongs to the long chain scorpion toxin family. Class 1 subfamily. As to expression, expressed by the venom gland.

It localises to the secreted. Inhibits voltage-gated potassium channel. This chain is Potassium channel toxin Ttr-beta-KTx, found in Tityus trivittatus (Argentinean scorpion).